The primary structure comprises 342 residues: Farnesyl pyrophosphate synthase 1 (342 aa).

Residues Lys47, Arg50, and Gln86 each contribute to the isopentenyl diphosphate site. Residues Asp93 and Asp97 each coordinate Mg(2+). Arg102 lines the dimethylallyl diphosphate pocket. Residue Arg103 coordinates isopentenyl diphosphate. Residues Lys190, Thr191, Gln229, Lys246, and Lys255 each coordinate dimethylallyl diphosphate.

The protein belongs to the FPP/GGPP synthase family. The cofactor is Mg(2+).

The protein localises to the cytoplasm. It carries out the reaction isopentenyl diphosphate + dimethylallyl diphosphate = (2E)-geranyl diphosphate + diphosphate. The enzyme catalyses isopentenyl diphosphate + (2E)-geranyl diphosphate = (2E,6E)-farnesyl diphosphate + diphosphate. It functions in the pathway isoprenoid biosynthesis; farnesyl diphosphate biosynthesis; farnesyl diphosphate from geranyl diphosphate and isopentenyl diphosphate: step 1/1. Its pathway is isoprenoid biosynthesis; geranyl diphosphate biosynthesis; geranyl diphosphate from dimethylallyl diphosphate and isopentenyl diphosphate: step 1/1. In terms of biological role, catalyzes the sequential condensation of isopentenyl pyrophosphate with the allylic pyrophosphates, dimethylallyl pyrophosphate, and then with the resultant geranylpyrophosphate to the ultimate product farnesyl pyrophosphate. This is Farnesyl pyrophosphate synthase 1 (FPS1) from Lupinus albus (White lupine).